The chain runs to 251 residues: Large ribosomal subunit protein uL3 (251 aa).

Glutamine 151 is subject to N5-methylglutamine. The tract at residues 214 to 251 (KDAPFPAGLKSAANSNSAPTETPAEEVAAPEATEGQEG) is disordered. Positions 231–251 (APTETPAEEVAAPEATEGQEG) are enriched in low complexity.

The protein belongs to the universal ribosomal protein uL3 family. In terms of assembly, part of the 50S ribosomal subunit. Forms a cluster with proteins L14 and L19. In terms of processing, methylated by PrmB.

One of the primary rRNA binding proteins, it binds directly near the 3'-end of the 23S rRNA, where it nucleates assembly of the 50S subunit. The sequence is that of Large ribosomal subunit protein uL3 from Rhizorhabdus wittichii (strain DSM 6014 / CCUG 31198 / JCM 15750 / NBRC 105917 / EY 4224 / RW1) (Sphingomonas wittichii).